A 245-amino-acid chain; its full sequence is MANQKKKEMVHNFQQKFTDKMKSLGLHFKNIDLYQQAFSHSSFINDFNMNRLEHNERLEFLGDAVLELTVSRYLFDRHPHLPEGNLTKMRATIVCEPSLVIFANKIKLNELILLGKGEEKTGGRTRPSLISDAFEAFVGALYLDQGLDSVWTFAEKVIFPYVEDDELVGVVDFKTQFQEYVHSQNKGDVTYQLIKEEGPAHHRLFTSEVILENKAVAEGKGKTKKESEQKAAEQAYKLMKNKKSL.

Residues 17–146 (FTDKMKSLGL…FVGALYLDQG (130 aa)) enclose the RNase III domain. E59 provides a ligand contact to Mg(2+). Residue D63 is part of the active site. Residues D132 and E135 each coordinate Mg(2+). The active site involves E135. The DRBM domain maps to 172–241 (DFKTQFQEYV…AEQAYKLMKN (70 aa)).

Belongs to the ribonuclease III family. Homodimer. Requires Mg(2+) as cofactor.

The protein resides in the cytoplasm. It carries out the reaction Endonucleolytic cleavage to 5'-phosphomonoester.. Its function is as follows. Digests double-stranded RNA. Involved in the processing of primary rRNA transcript to yield the immediate precursors to the large and small rRNAs (23S and 16S). Processes some mRNAs, and tRNAs when they are encoded in the rRNA operon. Processes pre-crRNA and tracrRNA of type II CRISPR loci if present in the organism. The protein is Ribonuclease 3 of Staphylococcus epidermidis (strain ATCC 12228 / FDA PCI 1200).